The following is a 241-amino-acid chain: uncharacterized protein (241 aa).

One can recognise an HTH cro/C1-type domain in the interval L32 to E86. Positions Q43 to V62 form a DNA-binding region, H-T-H motif.

This is an uncharacterized protein from Methanocaldococcus jannaschii (strain ATCC 43067 / DSM 2661 / JAL-1 / JCM 10045 / NBRC 100440) (Methanococcus jannaschii).